A 173-amino-acid chain; its full sequence is Ribosome maturation factor RimP (173 aa).

This sequence belongs to the RimP family.

The protein localises to the cytoplasm. In terms of biological role, required for maturation of 30S ribosomal subunits. This chain is Ribosome maturation factor RimP, found in Chlorobaculum tepidum (strain ATCC 49652 / DSM 12025 / NBRC 103806 / TLS) (Chlorobium tepidum).